The primary structure comprises 146 residues: Small ribosomal subunit protein uS9 (146 aa).

Ser3 is modified (phosphoserine). Lys60 is modified (N6-acetyllysine).

Belongs to the universal ribosomal protein uS9 family. In terms of assembly, component of the small ribosomal subunit. Part of the small subunit (SSU) processome, composed of more than 70 proteins and the RNA chaperone small nucleolar RNA (snoRNA) U3.

The protein localises to the cytoplasm. It localises to the nucleus. Its subcellular location is the nucleolus. Component of the small ribosomal subunit. The ribosome is a large ribonucleoprotein complex responsible for the synthesis of proteins in the cell. Part of the small subunit (SSU) processome, first precursor of the small eukaryotic ribosomal subunit. During the assembly of the SSU processome in the nucleolus, many ribosome biogenesis factors, an RNA chaperone and ribosomal proteins associate with the nascent pre-rRNA and work in concert to generate RNA folding, modifications, rearrangements and cleavage as well as targeted degradation of pre-ribosomal RNA by the RNA exosome. The polypeptide is Small ribosomal subunit protein uS9 (RPS16) (Bos taurus (Bovine)).